The primary structure comprises 221 residues: Glutathione S-transferase (221 aa).

Residues 3–83 (GKPVLHYANT…YIAGKYNLYG (81 aa)) enclose the GST N-terminal domain. Residues Tyr-9, Lys-45, 54–55 (QV), and 67–68 (QT) contribute to the glutathione site. The GST C-terminal domain maps to 85 to 208 (DLKERALIDM…QPGSQRKPRL (124 aa)).

It belongs to the GST superfamily. Alpha family. Homodimer or heterodimer of GSTA1 and GSTA2.

The catalysed reaction is RX + glutathione = an S-substituted glutathione + a halide anion + H(+). It carries out the reaction prostaglandin A2 + glutathione = prostaglandin A2-S-(R)-glutathione. The enzyme catalyses prostaglandin J2 + glutathione = prostaglandin J2-S-(R)-glutathione. It catalyses the reaction (13S)-hydroperoxy-(9Z,11E)-octadecadienoate + 2 glutathione = (13S)-hydroxy-(9Z,11E)-octadecadienoate + glutathione disulfide + H2O. The catalysed reaction is androst-5-ene-3,17-dione = androst-4-ene-3,17-dione. Functionally, glutathione S-transferase that catalyzes the nucleophilic attack of the sulfur atom of glutathione on the electrophilic groups of a wide range of exogenous and endogenous compounds. Involved in the formation of glutathione conjugates of both prostaglandin A2 (PGA2) and prostaglandin J2 (PGJ2). It also catalyzes the isomerization of D5-androstene-3,17-dione (AD) into D4-androstene-3,17-dione and may therefore play an important role in hormone biosynthesis. Through its glutathione-dependent peroxidase activity toward the fatty acid hydroperoxide (13S)-hydroperoxy-(9Z,11E)-octadecadienoate/13-HPODE it is also involved in the metabolism of oxidized linoleic acid. In Gallus gallus (Chicken), this protein is Glutathione S-transferase.